A 449-amino-acid chain; its full sequence is tRNA-2-methylthio-N(6)-dimethylallyladenosine synthase (449 aa).

An MTTase N-terminal domain is found at 3 to 124 (KMLYIKTYGC…LPTMLEKLDS (122 aa)). [4Fe-4S] cluster-binding residues include cysteine 12, cysteine 48, cysteine 87, cysteine 163, cysteine 167, and cysteine 170. Residues 149-380 (KSPTVSGLVS…QAQLMLQQLE (232 aa)) form the Radical SAM core domain. The TRAM domain maps to 383–447 (QKLIGKVVPV…ASSLFGEVCP (65 aa)).

It belongs to the methylthiotransferase family. MiaB subfamily. Monomer. The cofactor is [4Fe-4S] cluster.

It is found in the cytoplasm. The catalysed reaction is N(6)-dimethylallyladenosine(37) in tRNA + (sulfur carrier)-SH + AH2 + 2 S-adenosyl-L-methionine = 2-methylsulfanyl-N(6)-dimethylallyladenosine(37) in tRNA + (sulfur carrier)-H + 5'-deoxyadenosine + L-methionine + A + S-adenosyl-L-homocysteine + 2 H(+). Its function is as follows. Catalyzes the methylthiolation of N6-(dimethylallyl)adenosine (i(6)A), leading to the formation of 2-methylthio-N6-(dimethylallyl)adenosine (ms(2)i(6)A) at position 37 in tRNAs that read codons beginning with uridine. This chain is tRNA-2-methylthio-N(6)-dimethylallyladenosine synthase, found in Orientia tsutsugamushi (strain Boryong) (Rickettsia tsutsugamushi).